The following is a 339-amino-acid chain: Nucleoid-associated protein Asuc_0779 (339 aa).

The protein belongs to the YejK family.

It localises to the cytoplasm. The protein resides in the nucleoid. In Actinobacillus succinogenes (strain ATCC 55618 / DSM 22257 / CCUG 43843 / 130Z), this protein is Nucleoid-associated protein Asuc_0779.